Here is a 417-residue protein sequence, read N- to C-terminus: Tyrosine aminotransferase (417 aa).

N6-(pyridoxal phosphate)lysine is present on K249.

The protein belongs to the class-I pyridoxal-phosphate-dependent aminotransferase family. Homodimer. The cofactor is pyridoxal 5'-phosphate.

It catalyses the reaction L-tyrosine + 2-oxoglutarate = 3-(4-hydroxyphenyl)pyruvate + L-glutamate. It participates in amino-acid degradation; L-phenylalanine degradation; acetoacetate and fumarate from L-phenylalanine: step 2/6. In terms of biological role, transaminase involved in tyrosine breakdown. Converts tyrosine to p-hydroxyphenylpyruvate. Has much lower affinity and transaminase activity towards phenylalanine. This Dictyostelium discoideum (Social amoeba) protein is Tyrosine aminotransferase (tat).